A 703-amino-acid chain; its full sequence is MSSFLDILGDGHVNFEKCGDVVVSPKDNMVAMFCHFCKDIFTHLPEFMRHLQWSHSDVLQFTKEQNVYRVEELMSLETSEDDVQSQANSCSSGDSGLAGEMEDADGEPGSSECLANNLEIMNALAAFDVDVDGLNNVSHEQSYSKTPPDSRTEGFRCARKPGRVEKPPSICDLKSYNITRHSRKREAIKQRLSSVKKRIMRSLENDVISPRLNKLRSKLNNSLSSNISGPPKQSKMPSLLENSSVNELPAVLESTNPPNFDSEQPYVVSTTIKPSIRPCPSRTAVKTDRNISHQPVARRSTVNIERVDILPPINIKQKMKMSAKDIPFWESIIISSVASQQPSELNTTNNAVDQPPKRPERRSSLTVISSSPIQAMKPMRRSSMTRENTSPESSGILRSGEVESPAKANKRTKDSFEETSSSNEKGNAKRSKLEQNRCSMNFSLSASVTEYIRSDLKTSKLDLDSILRLAEPLESDYFKNTIVEDQVKNATKMGSPQKEFTKLQIGVKPEMEALKEDLRLLKTVGLLVLKDSCFEDKLPFEQSESFRKTAAKFSKIYHTYDTIWSYRKTKTIGVHQRLTEQLNSFTEEVNREIDCHLTTNEIKRILNLINSWYAYQIDQRFFRKATLSYSVEHYMFLFHFLPKINPTVYFCECCEEIFPNEARYKKHVQSVHAVHAFTCSECGKSFKRLYFYEKHLKTVHLKP.

Residues Met32 to His55 form a C2H2-type 1 zinc finger. 3 disordered regions span residues Thr78–Ser111, Ser138–Pro161, and Ser339–Glu434. Polar residues-rich tracts occupy residues Gln84–Asp94 and Ser138–Pro147. Residues Pro148 to Pro161 are compositionally biased toward basic and acidic residues. Polar residues-rich tracts occupy residues Ser339–Val352 and Ser364–Ile373. 2 consecutive C2H2-type zinc fingers follow at residues Tyr649–His672 and Phe677–His700.

The protein belongs to the Teflon family.

Its subcellular location is the nucleus. The protein localises to the chromosome. Functionally, specifically required in males for proper segregation of autosomal bivalents at meiosis I. Expression is required in the male germ line prior to spermatocyte stage S4. May have a role as a bridging molecule maintaining adhesion to hold autosome bivalents together via heterochromatic connections. The protein is Protein teflon of Drosophila pseudoobscura pseudoobscura (Fruit fly).